A 263-amino-acid chain; its full sequence is Oxidoreductase UcpA (263 aa).

Position 10 to 32 (10 to 32 (LITGASQGIGEGIARVFARHGAN)) interacts with NAD(+). Position 141 (S141) interacts with substrate. Residue Y155 is the Proton acceptor of the active site.

The protein belongs to the short-chain dehydrogenases/reductases (SDR) family.

The protein is Oxidoreductase UcpA (ucpA) of Salmonella typhi.